A 244-amino-acid chain; its full sequence is Gamma-gliadin (244 aa).

The tract at residues 18-64 (QQPFLQQPQQPSPQPQQVVQIISPATPTTIPSAGKPTSAPFPQQQQQ) is disordered. A compositionally biased stretch (polar residues) spans 35–48 (VVQIISPATPTTIP).

It belongs to the gliadin/glutenin family.

In terms of biological role, gliadin is the major seed storage protein in wheat. This chain is Gamma-gliadin, found in Triticum aestivum (Wheat).